Here is a 359-residue protein sequence, read N- to C-terminus: Fructose-bisphosphate aldolase (359 aa).

Residue Ser-61 participates in D-glyceraldehyde 3-phosphate binding. Asp-109 acts as the Proton donor in catalysis. Zn(2+) contacts are provided by His-110, Asp-144, Glu-174, and His-226. Gly-227 contacts dihydroxyacetone phosphate. His-265 contacts Zn(2+). Dihydroxyacetone phosphate is bound by residues 266–268 (GGS) and 287–290 (NIDT).

This sequence belongs to the class II fructose-bisphosphate aldolase family. The cofactor is Zn(2+).

It carries out the reaction beta-D-fructose 1,6-bisphosphate = D-glyceraldehyde 3-phosphate + dihydroxyacetone phosphate. Its pathway is carbohydrate degradation; glycolysis; D-glyceraldehyde 3-phosphate and glycerone phosphate from D-glucose: step 4/4. Functionally, catalyzes the aldol condensation of dihydroxyacetone phosphate (DHAP or glycerone-phosphate) with glyceraldehyde 3-phosphate (G3P) to form fructose 1,6-bisphosphate (FBP) in gluconeogenesis and the reverse reaction in glycolysis. In Borreliella burgdorferi (strain ATCC 35210 / DSM 4680 / CIP 102532 / B31) (Borrelia burgdorferi), this protein is Fructose-bisphosphate aldolase (fba).